Reading from the N-terminus, the 71-residue chain is Beta-defensin 9 (71 aa).

A signal peptide spans 1-23 (MRTLCSLLLICCLLFSYDTPVVG). 3 cysteine pairs are disulfide-bonded: C37/C66, C44/C59, and C49/C67.

Belongs to the beta-defensin family.

It is found in the secreted. Its function is as follows. Has antibacterial activity. The chain is Beta-defensin 9 (Defb9) from Rattus norvegicus (Rat).